Consider the following 162-residue polypeptide: NADH-quinone oxidoreductase subunit I (162 aa).

4Fe-4S ferredoxin-type domains lie at 52–82 (LRRY…IEAG) and 93–122 (VRYD…EGPN). [4Fe-4S] cluster is bound by residues C62, C65, C68, C72, C102, C105, C108, and C112.

This sequence belongs to the complex I 23 kDa subunit family. In terms of assembly, NDH-1 is composed of 14 different subunits. Subunits NuoA, H, J, K, L, M, N constitute the membrane sector of the complex. [4Fe-4S] cluster is required as a cofactor.

The protein localises to the cell inner membrane. The catalysed reaction is a quinone + NADH + 5 H(+)(in) = a quinol + NAD(+) + 4 H(+)(out). Its function is as follows. NDH-1 shuttles electrons from NADH, via FMN and iron-sulfur (Fe-S) centers, to quinones in the respiratory chain. The immediate electron acceptor for the enzyme in this species is believed to be ubiquinone. Couples the redox reaction to proton translocation (for every two electrons transferred, four hydrogen ions are translocated across the cytoplasmic membrane), and thus conserves the redox energy in a proton gradient. In Nitrobacter hamburgensis (strain DSM 10229 / NCIMB 13809 / X14), this protein is NADH-quinone oxidoreductase subunit I.